The sequence spans 524 residues: Excitatory amino acid transporter 3 (524 aa).

The Cytoplasmic portion of the chain corresponds to 1-18; that stretch reads MGKPARKGCEWKRFLKNN. Residues 19-38 form a helical membrane-spanning segment; it reads WVLLSTVAAVVLGITTGVLV. At 39-61 the chain is on the extracellular side; that stretch reads REHSNLSTLEKFYFAFPGEILMR. Asn-43 carries N-linked (GlcNAc...) asparagine glycosylation. Residues 62-82 form a helical membrane-spanning segment; the sequence is MLKLIILPLIISSMITGVAAL. The Cytoplasmic portion of the chain corresponds to 83–93; that stretch reads DSNVSGKIGLR. Residues 94 to 114 form a helical membrane-spanning segment; sequence AVVYYFCTTLIAVILGIVLVV. 3 residues coordinate Na(+): Tyr-98, Thr-101, and Thr-102. Topologically, residues 115-205 are extracellular; sequence SIKPGVTQKV…KTKEYKIVGM (91 aa). Asn-178 and Asn-195 each carry an N-linked (GlcNAc...) asparagine glycan. Residues 206-229 traverse the membrane as a helical segment; the sequence is YSDGINVLGLIVFCLVFGLVIGKM. Over 230–238 the chain is Cytoplasmic; the sequence is GEKGQILVD. Residues 239-266 form a helical membrane-spanning segment; it reads FFNALSDATMKIVQIIMCYMPLGILFLI. Over 267–286 the chain is Extracellular; sequence AGKIIEVEDWEIFRKLGLYM. Residues 287-308 traverse the membrane as a helical segment; the sequence is ATVLTGLAIHSIVILPLIYFIV. Topologically, residues 309–313 are cytoplasmic; sequence VRKNP. The discontinuously helical intramembrane region spans 314 to 344; the sequence is FRFAMGMAQALLTALMISSSSATLPVTFRCA. The L-aspartate site is built by Ser-331 and Ser-333. The Cytoplasmic portion of the chain corresponds to 345–353; sequence EENNQVDKR. A helical transmembrane segment spans residues 354 to 380; the sequence is ITRFVLPVGATINMDGTALYEAVAAVF. Gly-362, Thr-364, Asn-366, and Asp-368 together coordinate Na(+). L-aspartate is bound at residue Thr-370. Topologically, residues 381-393 are extracellular; the sequence is IAQLNDLDLGIGQ. The discontinuously helical intramembrane region spans 394 to 427; sequence IITISITATSASIGAAGVPQAGLVTMVIVLSAVG. Ser-405, Ile-406, and Ala-408 together coordinate Na(+). Val-411 is an L-aspartate binding site. Residues 428 to 440 are Extracellular-facing; that stretch reads LPAEDVTLIIAVD. The helical transmembrane segment at 441 to 462 threads the bilayer; sequence WLLDRFRTMVNVLGDAFGTGIV. The L-aspartate site is built by Arg-447, Thr-448, and Asn-451. Na(+) contacts are provided by Asn-451 and Asp-455. The Cytoplasmic segment spans residues 463–524; that stretch reads EKLSKKELEQ…TISFTQTSQF (62 aa). Residues Ser-517 and Ser-522 each carry the phosphoserine modification.

The protein belongs to the dicarboxylate/amino acid:cation symporter (DAACS) (TC 2.A.23) family. SLC1A1 subfamily. As to quaternary structure, homotrimer. Interacts with ARL6IP5. Interacts with RTN2 (via N-terminus); the interaction promotes cell surface expression of SLC1A1. Interacts with SORCS2; this interaction is important for normal expression at the cell membrane. In terms of processing, glycosylated. Expressed in all tissues tested including liver, muscle, testis, ovary, retinoblastoma cell line, neurons and brain (in which there was dense expression in substantia nigra, red nucleus, hippocampus and in cerebral cortical layers).

Its subcellular location is the cell membrane. It is found in the apical cell membrane. The protein resides in the synapse. It localises to the synaptosome. The protein localises to the early endosome membrane. Its subcellular location is the late endosome membrane. It is found in the recycling endosome membrane. The enzyme catalyses K(+)(in) + L-glutamate(out) + 3 Na(+)(out) + H(+)(out) = K(+)(out) + L-glutamate(in) + 3 Na(+)(in) + H(+)(in). It catalyses the reaction K(+)(in) + L-aspartate(out) + 3 Na(+)(out) + H(+)(out) = K(+)(out) + L-aspartate(in) + 3 Na(+)(in) + H(+)(in). It carries out the reaction D-aspartate(out) + K(+)(in) + 3 Na(+)(out) + H(+)(out) = D-aspartate(in) + K(+)(out) + 3 Na(+)(in) + H(+)(in). The catalysed reaction is K(+)(in) + L-cysteine(out) + 3 Na(+)(out) + H(+)(out) = K(+)(out) + L-cysteine(in) + 3 Na(+)(in) + H(+)(in). Sodium-dependent, high-affinity amino acid transporter that mediates the uptake of L-glutamate and also L-aspartate and D-aspartate. Can also transport L-cysteine. Functions as a symporter that transports one amino acid molecule together with two or three Na(+) ions and one proton, in parallel with the counter-transport of one K(+) ion. Mediates Cl(-) flux that is not coupled to amino acid transport; this avoids the accumulation of negative charges due to aspartate and Na(+) symport. Plays an important role in L-glutamate and L-aspartate reabsorption in renal tubuli. Plays a redundant role in the rapid removal of released glutamate from the synaptic cleft, which is essential for terminating the postsynaptic action of glutamate. Contributes to glutathione biosynthesis and protection against oxidative stress via its role in L-glutamate and L-cysteine transport. Negatively regulated by ARL6IP5. In Homo sapiens (Human), this protein is Excitatory amino acid transporter 3.